Here is a 404-residue protein sequence, read N- to C-terminus: Serine/threonine transporter SstT (404 aa).

Transmembrane regions (helical) follow at residues 12-32 (GGNL…LALV), 53-73 (AIAP…KEVG), 81-101 (ILVM…VLSF), 140-160 (ALAN…GIAL), 177-197 (AVSF…FGLV), 216-236 (LGVL…LIVF), 287-307 (VAIP…VTVL), 329-349 (IVAS…LLLI), and 356-376 (FNIP…IGVI).

It belongs to the dicarboxylate/amino acid:cation symporter (DAACS) (TC 2.A.23) family.

The protein localises to the cell inner membrane. It catalyses the reaction L-serine(in) + Na(+)(in) = L-serine(out) + Na(+)(out). The catalysed reaction is L-threonine(in) + Na(+)(in) = L-threonine(out) + Na(+)(out). Its function is as follows. Involved in the import of serine and threonine into the cell, with the concomitant import of sodium (symport system). The sequence is that of Serine/threonine transporter SstT from Actinobacillus pleuropneumoniae serotype 7 (strain AP76).